The primary structure comprises 832 residues: MEGDGGTPWALALLRTFDAGEFTGWEKVGSGGFGQVYKVRHVHWKTWLAIKCSPSLHVDDRERMELLEEAKKMEMAKFRYILPVYGICREPVGLVMEYMETGSLEKLLASEPLPWDLRFRIIHETAVGMNFLHCMAPPLLHLDLKPANILLDAHYHVKISDFGLAKCNGLSHSHDLSMDGLFGTIAYLPPERIREKSRLFDTKHDVYSFAIVIWGVLTQKKPFADEKNILHIMVKVVKGHRPELPPVCRARPRACSHLIRLMQRCWQGDPRVRPTFQGNGLNGELIRQVLAALLPVTGRWRSPGEGFRLESEVIIRVTCPLSSPQEITSETEDLCEKPDDEVKETAHDLDVKSPPEPRSEVVPARLKRASAPTFDNDYSLSELLSQLDSGVSQAVEGPEELSRSSSESKLPSSGSGKRLSGVSSVDSAFSSRGSLSLSFEREPSTSDLGTTDVQKKKLVDAIVSGDTSKLMKILQPQDVDLALDSGASLLHLAVEAGQEECAKWLLLNNANPNLSNRRGSTPLHMAVERRVRGVVELLLARKISVNAKDEDQWTALHFAAQNGDESSTRLLLEKNASVNEVDFEGRTPMHVACQHGQENIVRILLRRGVDVSLQGKDAWLPLHYAAWQGHLPIVKLLAKQPGVSVNAQTLDGRTPLHLAAQRGHYRVARILIDLCSDVNVCSLLAQTPLHVAAETGHTSTARLLLHRGAGKEAMTSDGYTALHLAARNGHLATVKLLVEEKADVLARGPLNQTALHLAAAHGHSEVVEELVSADVIDLFDEQGLSALHLAAQGRHAQTVETLLRHGAHINLQSLKFQGGHGPAATLLRRSKT.

Residues 22–286 (FTGWEKVGSG…QGNGLNGELI (265 aa)) enclose the Protein kinase domain. ATP contacts are provided by residues 28–36 (VGSGGFGQV) and Lys51. Residue Lys51 forms a Glycyl lysine isopeptide (Lys-Gly) (interchain with G-Cter in ubiquitin) linkage. Asp143 acts as the Proton acceptor in catalysis. A Glycyl lysine isopeptide (Lys-Gly) (interchain with G-Cter in ubiquitin) cross-link involves residue Lys145. Disordered regions lie at residues 325–368 (QEIT…RLKR) and 389–424 (SGVS…GVSS). Residues 329–342 (SETEDLCEKPDDEV) show a composition bias toward acidic residues. Positions 343–359 (KETAHDLDVKSPPEPRS) are enriched in basic and acidic residues. The span at 403–424 (RSSSESKLPSSGSGKRLSGVSS) shows a compositional bias: low complexity. ANK repeat units follow at residues 485–514 (SGAS…NPNL), 518–547 (RGST…SVNA), 551–580 (DQWT…SVNE), 584–613 (EGRT…DVSL), 617–647 (DAWL…SVNA), 651–680 (DGRT…DVNV), 684–713 (LAQT…GKEA), 717–746 (DGYT…DVLA), 750–780 (LNQT…DLFD), and 782–811 (QGLS…HINL).

It belongs to the protein kinase superfamily. TKL Ser/Thr protein kinase family. In terms of assembly, interacts with PRKCB. Interacts with TRAF1, TRAF2, TRAF3 and TRAF5. Interacts with BIRC2/c-IAP1, BIRC3/c-IAP2 and XIAP/BIRC4. In terms of processing, may be phosphorylated by MAP3K2 and MAP3K3. Post-translationally, proteolytically cleaved by during Fas-induced apoptosis. Cleavage at Asp-388 and Asp-426. Polyubiquitinated with 'Lys-48' and 'Lys-63'-linked chains by BIRC2/c-IAP1 and BIRC3/c-IAP2, leading to activation of NF-kappa-B. Expressed in hair follicles and skin.

The protein localises to the cytoplasm. It localises to the membrane. The catalysed reaction is L-seryl-[protein] + ATP = O-phospho-L-seryl-[protein] + ADP + H(+). It catalyses the reaction L-threonyl-[protein] + ATP = O-phospho-L-threonyl-[protein] + ADP + H(+). Serine/threonine protein kinase. Required for embryonic skin development and correct skin homeostasis in adults, via phosphorylation of PKP1 and subsequent promotion of keratinocyte differentiation and cell adhesion. It is a direct transcriptional target of TP63. Plays a role in NF-kappa-B activation. This chain is Receptor-interacting serine/threonine-protein kinase 4 (RIPK4), found in Homo sapiens (Human).